The sequence spans 367 residues: Dual-specificity RNA methyltransferase RlmN (367 aa).

Residue glutamate 91 is the Proton acceptor of the active site. In terms of domain architecture, Radical SAM core spans 102–337; that stretch reads GKVRMTQCLS…AIIRKSKGQD (236 aa). Cysteine 109 and cysteine 342 are joined by a disulfide. [4Fe-4S] cluster contacts are provided by cysteine 116, cysteine 120, and cysteine 123. S-adenosyl-L-methionine contacts are provided by residues 169-170, serine 201, 223-225, and asparagine 299; these read GE and SLH. The active-site S-methylcysteine intermediate is cysteine 342.

It belongs to the radical SAM superfamily. RlmN family. The cofactor is [4Fe-4S] cluster.

The protein resides in the cytoplasm. It carries out the reaction adenosine(2503) in 23S rRNA + 2 reduced [2Fe-2S]-[ferredoxin] + 2 S-adenosyl-L-methionine = 2-methyladenosine(2503) in 23S rRNA + 5'-deoxyadenosine + L-methionine + 2 oxidized [2Fe-2S]-[ferredoxin] + S-adenosyl-L-homocysteine. It catalyses the reaction adenosine(37) in tRNA + 2 reduced [2Fe-2S]-[ferredoxin] + 2 S-adenosyl-L-methionine = 2-methyladenosine(37) in tRNA + 5'-deoxyadenosine + L-methionine + 2 oxidized [2Fe-2S]-[ferredoxin] + S-adenosyl-L-homocysteine. Functionally, specifically methylates position 2 of adenine 2503 in 23S rRNA and position 2 of adenine 37 in tRNAs. m2A2503 modification seems to play a crucial role in the proofreading step occurring at the peptidyl transferase center and thus would serve to optimize ribosomal fidelity. This Nitratidesulfovibrio vulgaris (strain DSM 19637 / Miyazaki F) (Desulfovibrio vulgaris) protein is Dual-specificity RNA methyltransferase RlmN.